A 303-amino-acid chain; its full sequence is Inosose dehydratase (303 aa).

Belongs to the IolE/MocC family. Glutathione serves as cofactor. It depends on Co(2+) as a cofactor. Requires Mn(2+) as cofactor.

The catalysed reaction is scyllo-inosose = 3D-3,5/4-trihydroxycyclohexane-1,2-dione + H2O. Its pathway is polyol metabolism; myo-inositol degradation into acetyl-CoA; acetyl-CoA from myo-inositol: step 2/7. Catalyzes the dehydration of inosose (2-keto-myo-inositol, 2KMI or 2,4,6/3,5-pentahydroxycyclohexanone) to 3D-(3,5/4)-trihydroxycyclohexane-1,2-dione (D-2,3-diketo-4-deoxy-epi-inositol). This Halalkalibacterium halodurans (strain ATCC BAA-125 / DSM 18197 / FERM 7344 / JCM 9153 / C-125) (Bacillus halodurans) protein is Inosose dehydratase.